A 591-amino-acid chain; its full sequence is V-type ATP synthase alpha chain (591 aa).

An ATP-binding site is contributed by Gly242 to Thr249.

Belongs to the ATPase alpha/beta chains family.

It catalyses the reaction ATP + H2O + 4 H(+)(in) = ADP + phosphate + 5 H(+)(out). Functionally, produces ATP from ADP in the presence of a proton gradient across the membrane. The V-type alpha chain is a catalytic subunit. The chain is V-type ATP synthase alpha chain from Chlamydia trachomatis serovar A (strain ATCC VR-571B / DSM 19440 / HAR-13).